Here is a 101-residue protein sequence, read N- to C-terminus: UPF0213 protein VC_A0739 (101 aa).

The region spanning 9–85 (SPWFVYLVRC…KALSKSQKEA (77 aa)) is the GIY-YIG domain.

It belongs to the UPF0213 family.

This chain is UPF0213 protein VC_A0739, found in Vibrio cholerae serotype O1 (strain ATCC 39315 / El Tor Inaba N16961).